A 240-amino-acid polypeptide reads, in one-letter code: Urease accessory protein UreF (240 aa).

This sequence belongs to the UreF family. UreD, UreF and UreG form a complex that acts as a GTP-hydrolysis-dependent molecular chaperone, activating the urease apoprotein by helping to assemble the nickel containing metallocenter of UreC. The UreE protein probably delivers the nickel.

Its subcellular location is the cytoplasm. In terms of biological role, required for maturation of urease via the functional incorporation of the urease nickel metallocenter. The polypeptide is Urease accessory protein UreF (Bradyrhizobium sp. (strain ORS 278)).